Here is a 1071-residue protein sequence, read N- to C-terminus: ATP-dependent helicase/deoxyribonuclease subunit B (1071 aa).

The protein belongs to the helicase family. AddB/RexB type 2 subfamily. As to quaternary structure, heterodimer of AddA and RexB. The cofactor is Mg(2+).

Its function is as follows. The heterodimer acts as both an ATP-dependent DNA helicase and an ATP-dependent, dual-direction single-stranded exonuclease. Recognizes the chi site generating a DNA molecule suitable for the initiation of homologous recombination. This subunit has 5' -&gt; 3' nuclease activity but not helicase activity. The chain is ATP-dependent helicase/deoxyribonuclease subunit B from Streptococcus pyogenes serotype M6 (strain ATCC BAA-946 / MGAS10394).